The following is a 345-amino-acid chain: Phosphoribosylformylglycinamidine cyclo-ligase (345 aa).

Belongs to the AIR synthase family.

It localises to the cytoplasm. It carries out the reaction 2-formamido-N(1)-(5-O-phospho-beta-D-ribosyl)acetamidine + ATP = 5-amino-1-(5-phospho-beta-D-ribosyl)imidazole + ADP + phosphate + H(+). Its pathway is purine metabolism; IMP biosynthesis via de novo pathway; 5-amino-1-(5-phospho-D-ribosyl)imidazole from N(2)-formyl-N(1)-(5-phospho-D-ribosyl)glycinamide: step 2/2. The sequence is that of Phosphoribosylformylglycinamidine cyclo-ligase from Staphylococcus carnosus (strain TM300).